Here is a 154-residue protein sequence, read N- to C-terminus: Ascorbate-specific PTS system EIIA component (154 aa).

One can recognise a PTS EIIA type-2 domain in the interval 6 to 150 (SLAENKSIRL…QEVLDLIDRT (145 aa)). The active-site Tele-phosphohistidine intermediate is the His68. The residue at position 68 (His68) is a Phosphohistidine.

The protein resides in the cytoplasm. Functionally, the phosphoenolpyruvate-dependent sugar phosphotransferase system (sugar PTS), a major carbohydrate active transport system, catalyzes the phosphorylation of incoming sugar substrates concomitantly with their translocation across the cell membrane. The enzyme II UlaABC PTS system is involved in ascorbate transport. The sequence is that of Ascorbate-specific PTS system EIIA component (ulaC) from Shigella boydii serotype 4 (strain Sb227).